The sequence spans 522 residues: MNSLGGIRSWPANWRSTTASMTTTESVRKVPQVLTVAGSDSGAGAGIQADLKVCAARGVYCASVITAVTAQNTRGVQSVHLLPPEFISEQLKSVLSDFEFDVVKTGMLPSTEIVEVLLQNLSDFPVRALVVDPVMVSTSGHVLAGSSILSIFRERLLPIADIITPNVKEASALLDGFRIETVAEMRSAAKSLHEMGPRFVLVKGGDLPDSSDSVDVYFDGKEFHELRSPRIATRNTHGTGCTLASCIAAELAKGSSMLSAVKVAKRFVDNALDYSKDIVIGSGMQGPFDHFFGLKKDPQSSRCSIFNPDDLFLYAVTDSRMNKKWNRSIVDALKAAIEGGATIIQLREKEAETREFLEEAKACIDICRSHGVSLLINDRIDIALACDADGVHVGQSDMPVDLVRSLLGPDKIIGVSCKTPEQAHQAWKDGADYIGSGGVFPTNTKANNRTIGLDGLKEVCEASKLPVVAIGGIGISNAGSVMQIDAPNLKGVAVVSALFDQDCVLTQAKKLHKTLKESKRGI.

A chloroplast-targeting transit peptide spans 1 to 36 (MNSLGGIRSWPANWRSTTASMTTTESVRKVPQVLTV). 4-amino-2-methyl-5-(diphosphooxymethyl)pyrimidine is bound by residues 345–349 (QLREK) and Asn-377. Mg(2+) is bound by residues Asp-378 and Asp-397. Residue Ser-416 coordinates 4-amino-2-methyl-5-(diphosphooxymethyl)pyrimidine. Residue 442 to 444 (TNT) coordinates 2-[(2R,5Z)-2-carboxy-4-methylthiazol-5(2H)-ylidene]ethyl phosphate. Lys-445 is a 4-amino-2-methyl-5-(diphosphooxymethyl)pyrimidine binding site. 2-[(2R,5Z)-2-carboxy-4-methylthiazol-5(2H)-ylidene]ethyl phosphate is bound by residues Gly-472 and 495–496 (VS).

It belongs to the thiamine-phosphate synthase family. Mg(2+) is required as a cofactor.

The protein resides in the plastid. It localises to the chloroplast. The catalysed reaction is 2-[(2R,5Z)-2-carboxy-4-methylthiazol-5(2H)-ylidene]ethyl phosphate + 4-amino-2-methyl-5-(diphosphooxymethyl)pyrimidine + 2 H(+) = thiamine phosphate + CO2 + diphosphate. The enzyme catalyses 2-(2-carboxy-4-methylthiazol-5-yl)ethyl phosphate + 4-amino-2-methyl-5-(diphosphooxymethyl)pyrimidine + 2 H(+) = thiamine phosphate + CO2 + diphosphate. It carries out the reaction 4-methyl-5-(2-phosphooxyethyl)-thiazole + 4-amino-2-methyl-5-(diphosphooxymethyl)pyrimidine + H(+) = thiamine phosphate + diphosphate. It catalyses the reaction 4-amino-5-hydroxymethyl-2-methylpyrimidine + ATP = 4-amino-2-methyl-5-(phosphooxymethyl)pyrimidine + ADP + H(+). It participates in cofactor biosynthesis; thiamine diphosphate biosynthesis; thiamine phosphate from 4-amino-2-methyl-5-diphosphomethylpyrimidine and 4-methyl-5-(2-phosphoethyl)-thiazole: step 1/1. The protein operates within cofactor biosynthesis; thiamine diphosphate biosynthesis; 4-amino-2-methyl-5-diphosphomethylpyrimidine from 5-amino-1-(5-phospho-D-ribosyl)imidazole: step 2/3. In terms of biological role, essential for thiamine biosynthesis. Bifunctional enzyme that catalyzes the phosphorylation of hydroxymethylpyrimidine phosphate (HMP-P) to HMP-PP and condenses 4-methyl-5-(beta-hydroxyethyl)thiazole monophosphate (THZ-P) and 2-methyl-4-amino-5-hydroxymethyl pyrimidine pyrophosphate (HMP-PP) to form thiamine monophosphate (TMP). This is Thiamine biosynthetic bifunctional enzyme TH1, chloroplastic (TH1) from Arabidopsis thaliana (Mouse-ear cress).